Consider the following 430-residue polypeptide: Trigger factor (430 aa).

The region spanning aspartate 164–proline 249 is the PPIase FKBP-type domain.

This sequence belongs to the FKBP-type PPIase family. Tig subfamily.

The protein resides in the cytoplasm. The catalysed reaction is [protein]-peptidylproline (omega=180) = [protein]-peptidylproline (omega=0). Involved in protein export. Acts as a chaperone by maintaining the newly synthesized protein in an open conformation. Functions as a peptidyl-prolyl cis-trans isomerase. The protein is Trigger factor of Anaeromyxobacter sp. (strain Fw109-5).